A 586-amino-acid polypeptide reads, in one-letter code: A-type ATP synthase subunit A (586 aa).

232-239 contributes to the ATP binding site; the sequence is GPFGSGKT.

This sequence belongs to the ATPase alpha/beta chains family. Has multiple subunits with at least A(3), B(3), C, D, E, F, H, I and proteolipid K(x).

Its subcellular location is the cell membrane. The enzyme catalyses ATP + H2O + 4 H(+)(in) = ADP + phosphate + 5 H(+)(out). Its function is as follows. Component of the A-type ATP synthase that produces ATP from ADP in the presence of a proton gradient across the membrane. The A chain is the catalytic subunit. This is A-type ATP synthase subunit A from Methanococcus vannielii (strain ATCC 35089 / DSM 1224 / JCM 13029 / OCM 148 / SB).